Here is a 92-residue protein sequence, read N- to C-terminus: Large ribosomal subunit protein uL23 (92 aa).

It belongs to the universal ribosomal protein uL23 family. As to quaternary structure, part of the 50S ribosomal subunit. Contacts protein L29, and trigger factor when it is bound to the ribosome.

Its function is as follows. One of the early assembly proteins it binds 23S rRNA. One of the proteins that surrounds the polypeptide exit tunnel on the outside of the ribosome. Forms the main docking site for trigger factor binding to the ribosome. This chain is Large ribosomal subunit protein uL23, found in Bdellovibrio bacteriovorus (strain ATCC 15356 / DSM 50701 / NCIMB 9529 / HD100).